We begin with the raw amino-acid sequence, 131 residues long: UPF0102 protein YraN (131 aa).

Residues 1-20 (MATVPTRSGSPRQLTTKQTG) are disordered.

The protein belongs to the UPF0102 family.

In Escherichia coli O139:H28 (strain E24377A / ETEC), this protein is UPF0102 protein YraN.